A 431-amino-acid chain; its full sequence is Glutamyl-tRNA(Gln) amidotransferase subunit A (431 aa).

Active-site charge relay system residues include lysine 55 and serine 130. Serine 154 acts as the Acyl-ester intermediate in catalysis.

Belongs to the amidase family. GatA subfamily. In terms of assembly, heterotrimer of A, B and C subunits.

The catalysed reaction is L-glutamyl-tRNA(Gln) + L-glutamine + ATP + H2O = L-glutaminyl-tRNA(Gln) + L-glutamate + ADP + phosphate + H(+). Its function is as follows. Allows the formation of correctly charged Gln-tRNA(Gln) through the transamidation of misacylated Glu-tRNA(Gln) in organisms which lack glutaminyl-tRNA synthetase. The reaction takes place in the presence of glutamine and ATP through an activated gamma-phospho-Glu-tRNA(Gln). The polypeptide is Glutamyl-tRNA(Gln) amidotransferase subunit A (Methanococcus maripaludis (strain DSM 14266 / JCM 13030 / NBRC 101832 / S2 / LL)).